The following is a 69-amino-acid chain: Conopeptide Y-Pl1 (69 aa).

Residues 1 to 20 (MSKLGVVLFVFLLLLPLAAP) form the signal peptide. A propeptide spanning residues 21–69 (QPVGDQPADQPADRNAEARARFLHPFQYYTLYRYLTRFLHRYPIYYIRY) is cleaved from the precursor.

The protein belongs to the conotoxin M superfamily. Conopeptide Y family. As to expression, expressed by the venom duct.

It localises to the secreted. Tyrosine-rich conopeptide that targets several channels/receptors that are expressed in Xenopus oocytes. These targets are the voltage-gated potassium channels Kv1.6/KCNA6 (IC(50) is 170 nM) and Kv1.2/KCNA2 (IC(50) is 2.0 uM), Nav1.2/SCN2A (30% of inhibition), and N-methyl-D-aspartate (NMDA) receptor (GRIN1/GRIN2A/GRIN3B and GRIN1/GRIN2B/GRIN3B) (15% of inhibition). In vivo, causes the marine worm N.virens to move very slowly in contrast to control worms, and causes seizures (at 5 nmol) and death (20 nmol) to mice when intracranially injected. The protein is Conopeptide Y-Pl1 of Conus planorbis (Planorbis cone).